Consider the following 765-residue polypeptide: LPS-assembly protein LptD (765 aa).

A signal peptide spans 1–18; it reads MQIRYFLALSLLPQVVLA.

It belongs to the LptD family. In terms of assembly, component of the lipopolysaccharide transport and assembly complex. Interacts with LptE and LptA.

It is found in the cell outer membrane. Its function is as follows. Together with LptE, is involved in the assembly of lipopolysaccharide (LPS) at the surface of the outer membrane. The chain is LPS-assembly protein LptD from Shewanella sp. (strain ANA-3).